The following is a 347-amino-acid chain: MTTQPTTANDIKGLIAMVATGRPLSEADATRAFEAIMSGNATPAQIGGFLMALRVRGETVAEITAAARTMRDKAARIQAPAGAIDIVGTGGDCAGTYNISTAAALVTAACGVPVAKHGNRAASSKSGSADVLAALGVNLDADLALVERSIAEVGIGFMFAQRHHSAMKHVAPARSELGTRTIFNLLGPLANPAGARFELMGVFAQEWVEPLAEVLGRLGAERAWVVHGSDGLDEITTTGPTHVAEFRGGVVRSFDITPADAGLPLAKAEDLQGADPEANAQALRALLEGVKTPYRDIVVFNAAAALVVAGAAEDLATGAARAAQAIDSGAAKDTLARMIAIIGAPAS.

5-phospho-alpha-D-ribose 1-diphosphate-binding positions include Gly-88, 91-92 (GD), Thr-96, 98-101 (NIST), 116-124 (KHGNRAASS), and Ser-128. Anthranilate is bound at residue Gly-88. Residue Ser-100 participates in Mg(2+) binding. Residue Asn-119 coordinates anthranilate. Arg-174 is an anthranilate binding site. 2 residues coordinate Mg(2+): Asp-233 and Glu-234.

It belongs to the anthranilate phosphoribosyltransferase family. As to quaternary structure, homodimer. Mg(2+) is required as a cofactor.

It catalyses the reaction N-(5-phospho-beta-D-ribosyl)anthranilate + diphosphate = 5-phospho-alpha-D-ribose 1-diphosphate + anthranilate. The protein operates within amino-acid biosynthesis; L-tryptophan biosynthesis; L-tryptophan from chorismate: step 2/5. Functionally, catalyzes the transfer of the phosphoribosyl group of 5-phosphorylribose-1-pyrophosphate (PRPP) to anthranilate to yield N-(5'-phosphoribosyl)-anthranilate (PRA). The polypeptide is Anthranilate phosphoribosyltransferase (Rhodospirillum rubrum (strain ATCC 11170 / ATH 1.1.1 / DSM 467 / LMG 4362 / NCIMB 8255 / S1)).